The sequence spans 402 residues: Multidrug resistance protein MdtH (402 aa).

Over 1 to 12 (MSRVSQARNLGK) the chain is Cytoplasmic. Residues 13 to 33 (YFLLIDNMLVVLGFFVVFPLI) form a helical membrane-spanning segment. The Periplasmic portion of the chain corresponds to 34–98 (SIRFVDQMGW…GFATMGIAHE (65 aa)). A helical transmembrane segment spans residues 99 to 116 (PWLLWFSCFLSGLGGTLF). Topologically, residues 117 to 138 (DPPRSALVVKLIRPEQRGRFFS) are cytoplasmic. The chain crosses the membrane as a helical span at residues 139-159 (LLMMQDSAGAVIGALLGSWLL). At 160–164 (QYDFR) the chain is on the periplasmic side. A helical membrane pass occupies residues 165–185 (LVCATGAILFILCALFNAWLL). Residues 186–213 (PAWKLSTARTPVREGMRRVMSNKRFVTY) lie on the Cytoplasmic side of the membrane. A helical transmembrane segment spans residues 214 to 234 (VLTLAGYYMLAVQVMLMLPIM). The Periplasmic portion of the chain corresponds to 235–243 (VNDIAGSPA). The helical transmembrane segment at 244–264 (AVKWMYAIEACLSLTLLYPIA) threads the bilayer. Residues 265-276 (RWSEKRFRLEHR) are Cytoplasmic-facing. A helical transmembrane segment spans residues 277–297 (LMAGLLVMSLSMLPIGMVGNL). Residues 298–299 (QQ) lie on the Periplasmic side of the membrane. A helical membrane pass occupies residues 300–320 (LFTLICAFYIGSVIAEPARET). Residues 321 to 339 (LSASPADARARGSYMGFSR) lie on the Cytoplasmic side of the membrane. A helical transmembrane segment spans residues 340-360 (LGLAIGGAISYIGGGWLFDMG). Residues 361–367 (KALAQPE) are Periplasmic-facing. Residues 368 to 388 (LPWMMLGIIGFITFLALGWQF) traverse the membrane as a helical segment. Residues 389-402 (SHKRTPRRMLEPGA) lie on the Cytoplasmic side of the membrane.

The protein belongs to the major facilitator superfamily. DHA1 family. MdtH (TC 2.A.1.2.21) subfamily.

Its subcellular location is the cell inner membrane. The chain is Multidrug resistance protein MdtH from Salmonella typhi.